The sequence spans 116 residues: Ribonuclease P protein component (116 aa).

This sequence belongs to the RnpA family. Consists of a catalytic RNA component (M1 or rnpB) and a protein subunit.

It carries out the reaction Endonucleolytic cleavage of RNA, removing 5'-extranucleotides from tRNA precursor.. RNaseP catalyzes the removal of the 5'-leader sequence from pre-tRNA to produce the mature 5'-terminus. It can also cleave other RNA substrates such as 4.5S RNA. The protein component plays an auxiliary but essential role in vivo by binding to the 5'-leader sequence and broadening the substrate specificity of the ribozyme. The polypeptide is Ribonuclease P protein component (Exiguobacterium sibiricum (strain DSM 17290 / CCUG 55495 / CIP 109462 / JCM 13490 / 255-15)).